The primary structure comprises 193 residues: Probable GTP-binding protein EngB (193 aa).

Positions 22-193 (ALPEFALAGR…EAWAALERFL (172 aa)) constitute an EngB-type G domain. GTP is bound by residues 30–37 (GRSNVGKS), 57–61 (GKTQT), 75–78 (DVPG), 142–145 (TKAD), and 174–176 (FSA). Positions 37 and 59 each coordinate Mg(2+).

It belongs to the TRAFAC class TrmE-Era-EngA-EngB-Septin-like GTPase superfamily. EngB GTPase family. Mg(2+) serves as cofactor.

Its function is as follows. Necessary for normal cell division and for the maintenance of normal septation. The chain is Probable GTP-binding protein EngB from Geobacillus sp. (strain WCH70).